A 125-amino-acid polypeptide reads, in one-letter code: Transposase for transposon Tn554 (125 aa).

In terms of biological role, one of three proteins encoded by transposon Tn554 required for its transposition. The polypeptide is Transposase for transposon Tn554 (tnpC1) (Staphylococcus aureus (strain Mu50 / ATCC 700699)).